The primary structure comprises 1776 residues: TOG array regulator of axonemal microtubules protein 1 (1776 aa).

2 TOG regions span residues 94–311 (EEET…RRLE) and 351–595 (PQEL…MPSS). 8 HEAT repeats span residues 175–212 (AFSLALLPQLVVSLREDNPALRKDALQILHICLRRSSG), 214–246 (VLRTLIQGLESPDARLRASTALLLPILFTPEDL), 250–288 (LDLTEVIISLARKLGDQEMEEESETAFSSLQQIGERLGQ), 344–383 (NLKFEIIPQELHARLLDQEDYKNRTQAVEELKQLLGKFNP), 389–426 (ASLVGFISLLYNLLDDSNFKVVHGTLQVLHLLVIRLGE), 430–465 (QFLGPVIAASVKVLADNKLVIKQEYMKIFLKLMKEV), 466–503 (GPQRVLSLLLENLKHKHSRVREEVVNICICSLLTYPSE), and 505–542 (FDLPKLSFDLAPALVDSKRRVRQAALEAFAVLASSMGS). Disordered stretches follow at residues 655 to 676 (KNKLPWENEQPGVMGENQTSNS), 817 to 921 (ILPS…RGIN), 970 to 1000 (HSSLRSLRNSAAKKRAKLSGSSSTSDVDSPD), and 1062 to 1084 (TRLSSAKKTSHAAEQSPSAGFTR). Polar residues-rich tracts occupy residues 826 to 836 (PRTSPKHTSPL), 845 to 855 (DNSISFSNSWP), and 871 to 892 (LANQKSSDPTGENFQEKTTAVQ). The segment covering 988–1000 (SGSSSTSDVDSPD) has biased composition (low complexity). The tract at residues 1259–1481 (DIALTEALRL…YIKESVKNLR (223 aa)) is TOG 3. HEAT repeat units follow at residues 1297-1334 (TKLHETTFAVVQEVKNLRSGVSRAAVVCLGDLFTYLKK) and 1338-1375 (QELDSAVRALLHKAGESNTFIREDVDKALKAMVNNVTP). The segment at 1493-1536 (ASAKGRRSHPGSVGNTRSSSVSRDAFSSSEREVTEVREVPRKSA) is disordered. A compositionally biased stretch (low complexity) spans 1509-1520 (RSSSVSRDAFSS). The span at 1521 to 1533 (SEREVTEVREVPR) shows a compositional bias: basic and acidic residues. Residues 1540-1776 (SLESAEYIKV…LLDVTVLSEL (237 aa)) form a TOG 4 region. HEAT repeat units lie at residues 1541-1578 (LESAEYIKVITGLLNAKDFRDRINGIKQLLSDTENNQE), 1582-1619 (GNIVKIFDAFKSRLHDSNSKVNLVALETMHKMIPLLRD), and 1623-1661 (PIINMLIPAIVDNNLNSKNPGIYAAATNVVHALSQHVDN).

This sequence belongs to the Crescerin family. Interacts with ARMC9. Interacts with CCDC66, CEP104 and CSPP1.

It is found in the cell projection. It localises to the cilium. Its subcellular location is the cytoplasm. The protein resides in the cytoskeleton. The protein localises to the cilium axoneme. In terms of biological role, involved in ciliogenesis. It is required for appropriate acetylation and polyglutamylation of ciliary microtubules, and regulation of cilium length. Interacts with microtubules and promotes microtubule polymerization via its HEAT repeat domains, especially those in TOG region 2 and 4. The polypeptide is TOG array regulator of axonemal microtubules protein 1 (Togaram1) (Mus musculus (Mouse)).